The chain runs to 212 residues: MSYAYLFKYIIIGDTGVGKSCLLLQFTDKRFQPVHDLTIGVEFGARMITIDGKQIKLQIWDTAGQESFRSITRSYYRGAAGALLVYDITRRDTFNHLTTWLEDARQHSNSNMVIMLIGNKSDLEARREVKKEEGEAFAREHGLIFMETSAKTAANVEEAFINTAKEIYQKIQDGVFDINNEANGIKIGPQHSPASQSLNVGGSGGNQGGNCC.

Residue 13 to 21 (GDTGVGKSC) participates in GTP binding. The Effector region signature appears at 35–43 (HDLTIGVEF). GTP is bound by residues 61 to 65 (DTAGQ), 119 to 122 (NKSD), and 149 to 151 (SAK). The segment at 188-212 (GPQHSPASQSLNVGGSGGNQGGNCC) is disordered. Residues 201 to 212 (GGSGGNQGGNCC) show a composition bias toward gly residues. 2 S-geranylgeranyl cysteine lipidation sites follow: Cys211 and Cys212.

This sequence belongs to the small GTPase superfamily. Rab family.

The protein localises to the endoplasmic reticulum-Golgi intermediate compartment membrane. Its subcellular location is the endoplasmic reticulum membrane. The protein resides in the golgi apparatus membrane. Required for protein transport from the endoplasmic reticulum to the Golgi complex. In Lymnaea stagnalis (Great pond snail), this protein is Ras-related protein Rab-2 (RAB2).